The following is a 287-amino-acid chain: Phosphatidylserine decarboxylase proenzyme (287 aa).

Active-site charge relay system; for autoendoproteolytic cleavage activity residues include D90, H147, and S253. Catalysis depends on S253, which acts as the Schiff-base intermediate with substrate; via pyruvic acid; for decarboxylase activity. Pyruvic acid (Ser); by autocatalysis is present on S253.

This sequence belongs to the phosphatidylserine decarboxylase family. PSD-B subfamily. Prokaryotic type I sub-subfamily. As to quaternary structure, heterodimer of a large membrane-associated beta subunit and a small pyruvoyl-containing alpha subunit. Pyruvate serves as cofactor. In terms of processing, is synthesized initially as an inactive proenzyme. Formation of the active enzyme involves a self-maturation process in which the active site pyruvoyl group is generated from an internal serine residue via an autocatalytic post-translational modification. Two non-identical subunits are generated from the proenzyme in this reaction, and the pyruvate is formed at the N-terminus of the alpha chain, which is derived from the carboxyl end of the proenzyme. The autoendoproteolytic cleavage occurs by a canonical serine protease mechanism, in which the side chain hydroxyl group of the serine supplies its oxygen atom to form the C-terminus of the beta chain, while the remainder of the serine residue undergoes an oxidative deamination to produce ammonia and the pyruvoyl prosthetic group on the alpha chain. During this reaction, the Ser that is part of the protease active site of the proenzyme becomes the pyruvoyl prosthetic group, which constitutes an essential element of the active site of the mature decarboxylase.

It is found in the cell membrane. It catalyses the reaction a 1,2-diacyl-sn-glycero-3-phospho-L-serine + H(+) = a 1,2-diacyl-sn-glycero-3-phosphoethanolamine + CO2. Its pathway is phospholipid metabolism; phosphatidylethanolamine biosynthesis; phosphatidylethanolamine from CDP-diacylglycerol: step 2/2. Its function is as follows. Catalyzes the formation of phosphatidylethanolamine (PtdEtn) from phosphatidylserine (PtdSer). This chain is Phosphatidylserine decarboxylase proenzyme, found in Aliivibrio fischeri (strain ATCC 700601 / ES114) (Vibrio fischeri).